Reading from the N-terminus, the 254-residue chain is 5-oxoprolinase subunit A (254 aa).

Belongs to the LamB/PxpA family. As to quaternary structure, forms a complex composed of PxpA, PxpB and PxpC.

It carries out the reaction 5-oxo-L-proline + ATP + 2 H2O = L-glutamate + ADP + phosphate + H(+). Its function is as follows. Catalyzes the cleavage of 5-oxoproline to form L-glutamate coupled to the hydrolysis of ATP to ADP and inorganic phosphate. The protein is 5-oxoprolinase subunit A of Burkholderia lata (strain ATCC 17760 / DSM 23089 / LMG 22485 / NCIMB 9086 / R18194 / 383).